A 424-amino-acid chain; its full sequence is Tyrosine--tRNA ligase (424 aa).

Y37 is an L-tyrosine binding site. The short motif at 42–51 (PTADSLHLGH) is the 'HIGH' region element. 2 residues coordinate L-tyrosine: Y175 and Q179. A 'KMSKS' region motif is present at residues 235–239 (KFGKT). Position 238 (K238) interacts with ATP. The 58-residue stretch at 357–414 (ADLQQALVNAELVPSRGQARTMIGSNAVAINGEKQADPEYVFTDADRLFGRYTLLRRG) folds into the S4 RNA-binding domain.

It belongs to the class-I aminoacyl-tRNA synthetase family. TyrS type 1 subfamily. In terms of assembly, homodimer.

Its subcellular location is the cytoplasm. The catalysed reaction is tRNA(Tyr) + L-tyrosine + ATP = L-tyrosyl-tRNA(Tyr) + AMP + diphosphate + H(+). In terms of biological role, catalyzes the attachment of tyrosine to tRNA(Tyr) in a two-step reaction: tyrosine is first activated by ATP to form Tyr-AMP and then transferred to the acceptor end of tRNA(Tyr). The sequence is that of Tyrosine--tRNA ligase from Yersinia pseudotuberculosis serotype O:1b (strain IP 31758).